The sequence spans 368 residues: UDP-N-acetylglucosamine--N-acetylmuramyl-(pentapeptide) pyrophosphoryl-undecaprenol N-acetylglucosamine transferase (368 aa).

Residues 11 to 13, Asn123, Arg164, Ser188, Ile250, and Gln295 each bind UDP-N-acetyl-alpha-D-glucosamine; that span reads TGG.

Belongs to the glycosyltransferase 28 family. MurG subfamily.

The protein resides in the cell inner membrane. It catalyses the reaction di-trans,octa-cis-undecaprenyl diphospho-N-acetyl-alpha-D-muramoyl-L-alanyl-D-glutamyl-meso-2,6-diaminopimeloyl-D-alanyl-D-alanine + UDP-N-acetyl-alpha-D-glucosamine = di-trans,octa-cis-undecaprenyl diphospho-[N-acetyl-alpha-D-glucosaminyl-(1-&gt;4)]-N-acetyl-alpha-D-muramoyl-L-alanyl-D-glutamyl-meso-2,6-diaminopimeloyl-D-alanyl-D-alanine + UDP + H(+). The protein operates within cell wall biogenesis; peptidoglycan biosynthesis. In terms of biological role, cell wall formation. Catalyzes the transfer of a GlcNAc subunit on undecaprenyl-pyrophosphoryl-MurNAc-pentapeptide (lipid intermediate I) to form undecaprenyl-pyrophosphoryl-MurNAc-(pentapeptide)GlcNAc (lipid intermediate II). In Solidesulfovibrio magneticus (strain ATCC 700980 / DSM 13731 / RS-1) (Desulfovibrio magneticus), this protein is UDP-N-acetylglucosamine--N-acetylmuramyl-(pentapeptide) pyrophosphoryl-undecaprenol N-acetylglucosamine transferase.